Reading from the N-terminus, the 63-residue chain is Beta-defensin 4 (63 aa).

Residues 1 to 22 (MRIHYLLFTFLLVLLSPLAAFT) form the signal peptide. Position 23 is a pyrrolidone carboxylic acid (glutamine 23). 3 cysteine pairs are disulfide-bonded: cysteine 31/cysteine 59, cysteine 38/cysteine 52, and cysteine 42/cysteine 60.

This sequence belongs to the beta-defensin family. As to expression, tongue, esophagus and trachea.

The protein resides in the secreted. Exhibits antimicrobial activity against Gram-negative bacteria and Gram-positive bacteria. May act as a ligand for C-C chemokine receptor CCR6. Can bind to mouse (but not human) CCR6 and induce chemotactic activity of CCR6-expressing cells. This Mus musculus (Mouse) protein is Beta-defensin 4 (Defb4).